A 78-amino-acid polypeptide reads, in one-letter code: Sec-independent protein translocase protein TatA (78 aa).

Residues 1-21 (MGGISIWQLLIVALIVVLLFG) form a helical membrane-spanning segment. The disordered stretch occupies residues 40–78 (KSAMSSEEEKKAIEDSASEKTAQTEEKKTESKDKDKEQV). Basic and acidic residues predominate over residues 46–78 (EEEKKAIEDSASEKTAQTEEKKTESKDKDKEQV).

This sequence belongs to the TatA/E family. In terms of assembly, the Tat system comprises two distinct complexes: a TatABC complex, containing multiple copies of TatA, TatB and TatC subunits, and a separate TatA complex, containing only TatA subunits. Substrates initially bind to the TatABC complex, which probably triggers association of the separate TatA complex to form the active translocon.

It is found in the cell inner membrane. In terms of biological role, part of the twin-arginine translocation (Tat) system that transports large folded proteins containing a characteristic twin-arginine motif in their signal peptide across membranes. TatA could form the protein-conducting channel of the Tat system. The polypeptide is Sec-independent protein translocase protein TatA (Shewanella sediminis (strain HAW-EB3)).